Here is a 571-residue protein sequence, read N- to C-terminus: MSGHSRNSEQEDTLSEELDEDELLANLSPEELKELQSEMEVMAPDPHLPVGMIQKDQTDKAPTGNFNHKSLVDYMYLQKASRRMLEDERVPVSFVQSEKNTQNQREVGDKGIKNMPQFLKEKLNSEILAKKRESNGSNNVQEAEDDDEDEEEEEEDDEDEEEEEEDEEDDEGEEDEDGEQANREKNDAKEQIHNNPGTYQQLATKTAHEQKDTSETKEKGEKKIAKLDPKKLALDTSFLKVSARPSGNQTDLDGSLRRVRQNDPDMKELNLNNIENIPKEMLLDFVNAMKKNKHIKTFSLANVGADESVAFALANMLRENRSVTTLNIESNFITGKGIVAIMRCLQFNETLTELRFHNQRHMLGHHAEMEISRLLKANTTLLKMGYHFELPGPRMVVTNLLTRNQDKRRQKRQEEQQQQQLKEQRKLIAMLENGLGLPPGMWERLGGPMPDPRMQEFFQPASGRPLDAQEVPFGSRKEMIKNPPQPPQCKTDPDSFRVVKLKRIQRKSRMPEAREAQEKTNLKDVIKTLKPVPRNRPPPLVEITPRDQLLNDIRHSNVAYLKPVQLPKELE.

Disordered stretches follow at residues 1–29 (MSGH…NLSP), 46–67 (PHLP…GNFN), and 91–228 (PVSF…AKLD). Residues 10–23 (QEDTLSEELDEDEL) show a composition bias toward acidic residues. The span at 94 to 105 (FVQSEKNTQNQR) shows a compositional bias: polar residues. The segment covering 119 to 134 (LKEKLNSEILAKKRES) has biased composition (basic and acidic residues). Positions 142–179 (EAEDDDEDEEEEEEDDEDEEEEEEDEEDDEGEEDEDGE) are enriched in acidic residues. Residues 180 to 192 (QANREKNDAKEQI) show a composition bias toward basic and acidic residues. The segment covering 193-204 (HNNPGTYQQLAT) has biased composition (polar residues). Positions 206-228 (TAHEQKDTSETKEKGEKKIAKLD) are enriched in basic and acidic residues. Residues 397 to 436 (VTNLLTRNQDKRRQKRQEEQQQQQLKEQRKLIAMLENGLG) adopt a coiled-coil conformation. A WH2 domain is found at 545-564 (PRDQLLNDIRHSNVAYLKPV).

This sequence belongs to the tropomodulin family. As to quaternary structure, may interact with tropomyosin alpha (TPM1/2) N-terminus. Interacts with KLHL40; leading to stabilization. Post-translationally, ubiquitinated, leading to its degradation. Interaction with KLHL40 negatively regulates ubiquitination and degradation. In terms of tissue distribution, skeletal muscle and heart-specific (at protein level).

The protein resides in the cytoplasm. It localises to the myofibril. Its subcellular location is the sarcomere. The protein localises to the a band. It is found in the m line. The protein resides in the cytoskeleton. Essential for the organization of sarcomeric actin thin filaments in skeletal muscle. Increases the rate of actin polymerization. The polypeptide is Leiomodin-3 (Mus musculus (Mouse)).